The following is a 455-amino-acid chain: Ribosomal protein uS12 methylthiotransferase RimO (455 aa).

The MTTase N-terminal domain occupies 30-140 (PTIGMVSLGC…VLDAVHGAVP (111 aa)). Positions 39, 75, 104, 171, 175, and 178 each coordinate [4Fe-4S] cluster. Residues 157 to 386 (LTPRHFSYLK…MEKAQAISEV (230 aa)) form the Radical SAM core domain. One can recognise a TRAM domain in the interval 389–455 (AAKVGRRIEV…GEYDIWGRPV (67 aa)).

Belongs to the methylthiotransferase family. RimO subfamily. [4Fe-4S] cluster is required as a cofactor.

The protein localises to the cytoplasm. It catalyses the reaction L-aspartate(89)-[ribosomal protein uS12]-hydrogen + (sulfur carrier)-SH + AH2 + 2 S-adenosyl-L-methionine = 3-methylsulfanyl-L-aspartate(89)-[ribosomal protein uS12]-hydrogen + (sulfur carrier)-H + 5'-deoxyadenosine + L-methionine + A + S-adenosyl-L-homocysteine + 2 H(+). Catalyzes the methylthiolation of an aspartic acid residue of ribosomal protein uS12. In Cereibacter sphaeroides (strain ATCC 17023 / DSM 158 / JCM 6121 / CCUG 31486 / LMG 2827 / NBRC 12203 / NCIMB 8253 / ATH 2.4.1.) (Rhodobacter sphaeroides), this protein is Ribosomal protein uS12 methylthiotransferase RimO.